An 897-amino-acid polypeptide reads, in one-letter code: Isoleucine--tRNA ligase (897 aa).

A 'HIGH' region motif is present at residues 59 to 69; sequence PYANGDIHVGH. L-isoleucyl-5'-AMP is bound at residue E553. The 'KMSKS' region signature appears at 594–598; that stretch reads KMSKS. K597 is a binding site for ATP. Positions 866, 869, 883, and 886 each coordinate Zn(2+).

It belongs to the class-I aminoacyl-tRNA synthetase family. IleS type 1 subfamily. In terms of assembly, monomer. Requires Zn(2+) as cofactor.

Its subcellular location is the cytoplasm. The enzyme catalyses tRNA(Ile) + L-isoleucine + ATP = L-isoleucyl-tRNA(Ile) + AMP + diphosphate. Functionally, catalyzes the attachment of isoleucine to tRNA(Ile). As IleRS can inadvertently accommodate and process structurally similar amino acids such as valine, to avoid such errors it has two additional distinct tRNA(Ile)-dependent editing activities. One activity is designated as 'pretransfer' editing and involves the hydrolysis of activated Val-AMP. The other activity is designated 'posttransfer' editing and involves deacylation of mischarged Val-tRNA(Ile). This Mycoplasmopsis synoviae (strain 53) (Mycoplasma synoviae) protein is Isoleucine--tRNA ligase.